The chain runs to 448 residues: Antizyme inhibitor 1 (448 aa).

Belongs to the Orn/Lys/Arg decarboxylase class-II family. ODC antizyme inhibitor subfamily. As to quaternary structure, monomer. Interacts with OAZ1 and OAZ3; this interaction disrupts the interaction between the antizyme and ODC1. Post-translationally, ubiquitinated, leading to its proteasomal degradation; a process that is reduced in presence of antizyme OAZ1. Expressed in various tissues including liver, heart and kidney.

Its subcellular location is the nucleus. Its function is as follows. Antizyme inhibitor (AZI) protein that positively regulates ornithine decarboxylase (ODC) activity and polyamine uptake. AZI is an enzymatically inactive ODC homolog that counteracts the negative effect of ODC antizymes (AZs) OAZ1, OAZ2 and OAZ3 on ODC activity by competing with ODC for antizyme-binding. Inhibits antizyme-dependent ODC degradation and releases ODC monomers from their inactive complex with antizymes, leading to formation of the catalytically active ODC homodimer and restoring polyamine production. The polypeptide is Antizyme inhibitor 1 (Azin1) (Rattus norvegicus (Rat)).